Consider the following 91-residue polypeptide: Large ribosomal subunit protein bL31 (91 aa).

A disordered region spans residues 62 to 91 (RRKYSGTKPQQTAKGKKAAPKSTPKTNKKG).

The protein belongs to the bacterial ribosomal protein bL31 family. Type A subfamily. Part of the 50S ribosomal subunit.

In terms of biological role, binds the 23S rRNA. In Thermosynechococcus vestitus (strain NIES-2133 / IAM M-273 / BP-1), this protein is Large ribosomal subunit protein bL31.